Here is a 441-residue protein sequence, read N- to C-terminus: Ribosomal protein uS12 methylthiotransferase RimO (441 aa).

One can recognise an MTTase N-terminal domain in the interval 6–116 (QKVGIVSLGC…VVAAVHEAAP (111 aa)). Positions 15, 51, 80, 147, 151, and 154 each coordinate [4Fe-4S] cluster. Residues 133-370 (LTPRHYAYLK…MAAQQEISER (238 aa)) enclose the Radical SAM core domain. Positions 373–439 (AQKVGTVIEA…EYDLWGSLAG (67 aa)) constitute a TRAM domain.

This sequence belongs to the methylthiotransferase family. RimO subfamily. It depends on [4Fe-4S] cluster as a cofactor.

It is found in the cytoplasm. The enzyme catalyses L-aspartate(89)-[ribosomal protein uS12]-hydrogen + (sulfur carrier)-SH + AH2 + 2 S-adenosyl-L-methionine = 3-methylsulfanyl-L-aspartate(89)-[ribosomal protein uS12]-hydrogen + (sulfur carrier)-H + 5'-deoxyadenosine + L-methionine + A + S-adenosyl-L-homocysteine + 2 H(+). In terms of biological role, catalyzes the methylthiolation of an aspartic acid residue of ribosomal protein uS12. This chain is Ribosomal protein uS12 methylthiotransferase RimO, found in Rhodospirillum rubrum (strain ATCC 11170 / ATH 1.1.1 / DSM 467 / LMG 4362 / NCIMB 8255 / S1).